The following is a 411-amino-acid chain: Tyrosine--tRNA ligase (411 aa).

Y33 serves as a coordination point for L-tyrosine. Positions 38–47 match the 'HIGH' region motif; the sequence is PTADSLHLGN. L-tyrosine is bound by residues Y160 and Q164. The 'KMSKS' region signature appears at 222–226; the sequence is KFGKS. K225 is an ATP binding site. Residues 346–410 form the S4 RNA-binding domain; it reads VNLVNFLVEN…GKKKILICKV (65 aa).

The protein belongs to the class-I aminoacyl-tRNA synthetase family. TyrS type 1 subfamily. Homodimer.

The protein localises to the cytoplasm. It carries out the reaction tRNA(Tyr) + L-tyrosine + ATP = L-tyrosyl-tRNA(Tyr) + AMP + diphosphate + H(+). Functionally, catalyzes the attachment of tyrosine to tRNA(Tyr) in a two-step reaction: tyrosine is first activated by ATP to form Tyr-AMP and then transferred to the acceptor end of tRNA(Tyr). The polypeptide is Tyrosine--tRNA ligase (Mycoplasmopsis synoviae (strain 53) (Mycoplasma synoviae)).